The sequence spans 214 residues: RNA-free ribonuclease P (214 aa).

The protein belongs to the HARP family.

The enzyme catalyses Endonucleolytic cleavage of RNA, removing 5'-extranucleotides from tRNA precursor.. Its function is as follows. RNA-free RNase P that catalyzes the removal of the 5'-leader sequence from pre-tRNA to produce the mature 5'-terminus. The protein is RNA-free ribonuclease P of Aeropyrum pernix (strain ATCC 700893 / DSM 11879 / JCM 9820 / NBRC 100138 / K1).